We begin with the raw amino-acid sequence, 413 residues long: Sporulation-specific protein 74 (413 aa).

The interval 1–87 (MGAGTLLNGL…SEHTDDFNDG (87 aa)) is disordered. The span at 69-83 (HENKDIHERSEHTDD) shows a compositional bias: basic and acidic residues.

As to quaternary structure, interacts with itself. Interacts with MPC54, NUD1 and SPO21/MPC70.

Its subcellular location is the cytoplasm. The protein resides in the cytoskeleton. The protein localises to the microtubule organizing center. It localises to the spindle pole body. Its function is as follows. Involved in the pathway that organizes the shaping and sizing of the prospore membrane (PSM) during sporulation. Probable component of a core structural unit of the scaffold that initiates synthesis of the prospore membrane. This chain is Sporulation-specific protein 74 (SPO74), found in Saccharomyces cerevisiae (strain ATCC 204508 / S288c) (Baker's yeast).